The primary structure comprises 184 residues: Ribosome-recycling factor (184 aa).

The protein belongs to the RRF family.

It is found in the cytoplasm. In terms of biological role, responsible for the release of ribosomes from messenger RNA at the termination of protein biosynthesis. May increase the efficiency of translation by recycling ribosomes from one round of translation to another. This is Ribosome-recycling factor from Natranaerobius thermophilus (strain ATCC BAA-1301 / DSM 18059 / JW/NM-WN-LF).